The sequence spans 216 residues: MMELYRAAVQLIVGVGLGVGLWLREAQGERHIVFWNSSNYRFMQEDYTVQVQLNDYLDIVCPYYEEGSVAGHTVERYTLFLVDYEEYETCKPKSKDQVRWECNKPFAPHGPEKFCEKFQKFTPFTLGTEFREGRTYYYISKPIHYHGETCMRLRVHVSGRTTPPPVNVHTPRSHIQSDEPEVPLPGVMKSVAGNSAAPGTPCTLYGLLLAALLLRL.

An N-terminal signal peptide occupies residues 1–28 (MMELYRAAVQLIVGVGLGVGLWLREAQG). The region spanning 29–161 (ERHIVFWNSS…RLRVHVSGRT (133 aa)) is the Ephrin RBD domain. Asn-36 is a glycosylation site (N-linked (GlcNAc...) asparagine). Cys-61 and Cys-102 are oxidised to a cystine. The disordered stretch occupies residues 162–181 (TPPPVNVHTPRSHIQSDEPE). The GPI-anchor amidated serine moiety is linked to residue Ser-195. The propeptide at 196 to 216 (AAPGTPCTLYGLLLAALLLRL) is removed in mature form.

This sequence belongs to the ephrin family. Binds to the receptor tyrosine kinases EPHA2, EPHA4, EPHA5, EPHA6 and EPHA7. Also binds with low affinity to EPHA1.

It is found in the membrane. Functionally, cell surface GPI-bound ligand for Eph receptors, a family of receptor tyrosine kinases which are crucial for migration, repulsion and adhesion during neuronal, vascular and epithelial development. Binds promiscuously Eph receptors residing on adjacent cells, leading to contact-dependent bidirectional signaling into neighboring cells. This is Ephrin-A1 (efna1) from Xenopus laevis (African clawed frog).